A 173-amino-acid chain; its full sequence is NADH-ubiquinone oxidoreductase chain 6 (173 aa).

5 helical membrane passes run 1–21 (MTYF…GVAS), 27–47 (YGVV…LSLG), 48–68 (VSFV…VVFV), 87–107 (VVGY…IGGL), and 139–159 (CGVG…FVVL).

The protein belongs to the complex I subunit 6 family.

It is found in the mitochondrion membrane. The enzyme catalyses a ubiquinone + NADH + 5 H(+)(in) = a ubiquinol + NAD(+) + 4 H(+)(out). Core subunit of the mitochondrial membrane respiratory chain NADH dehydrogenase (Complex I) that is believed to belong to the minimal assembly required for catalysis. Complex I functions in the transfer of electrons from NADH to the respiratory chain. The immediate electron acceptor for the enzyme is believed to be ubiquinone. This chain is NADH-ubiquinone oxidoreductase chain 6 (MT-ND6), found in Synthliboramphus hypoleucus (Guadalupe murrelet).